The sequence spans 357 residues: MDFPGGSGRQQQLPPMTPLPLARQGSVYSLTFDEFQSTLGGVGKDFGSMNMDELLRSIWTAEESHAVGAATTTTATTASVAAAEHAAVGAPPVQRQGSLTLPRTLSQKTVDEVWRDMMCFGGGGASTAPAAAEPPPPAHRQQTLGEITLEEFLVRAGVVREDMSVPPVPPAPTPTAAAVPPPPPPQQQTPMLFGQSNVFPPMVPPLSLGNGLVSGAVGHGGGGAASLVSPVRPVSSNGFGKMEGGDLSSLSPSPVPYVFKGGLRGRKAPGIEKVVERRQRRMIKNRESAARSRQRKQAYMMELEAEVAKLKELNDELQKKQDEMLEQQKNEVLERMSRQVGPTAKRICLRRTLTGPW.

A disordered region spans residues 166-185; sequence PPVPPAPTPTAAAVPPPPPP. The bZIP domain maps to 275 to 338; sequence VERRQRRMIK…KNEVLERMSR (64 aa). Positions 277-296 are basic motif; sequence RRQRRMIKNRESAARSRQRK. The segment at 303 to 317 is leucine-zipper; that stretch reads LEAEVAKLKELNDEL.

Belongs to the bZIP family. ABI5 subfamily. As to expression, highly expressed in leaves.

It is found in the nucleus. Functionally, transcriptional activator that mediates abscisic acid (ABA) signaling. Can regulate the expression of a wide spectrum of stress-related genes in response to abiotic stresses through an ABA-dependent regulation pathway. Confers ABA-dependent drought and salinity tolerance. Binds specifically to the ABA-responsive elements (ABRE) in the promoter of target genes to mediate stress-responsive ABA signaling. The polypeptide is bZIP transcription factor 23 (Oryza sativa subsp. japonica (Rice)).